A 284-amino-acid polypeptide reads, in one-letter code: ATP phosphoribosyltransferase (284 aa).

Belongs to the ATP phosphoribosyltransferase family. Long subfamily. Equilibrium between an active dimeric form, an inactive hexameric form and higher aggregates. Interconversion between the various forms is largely reversible and is influenced by the natural substrates and inhibitors of the enzyme. Mg(2+) serves as cofactor.

It is found in the cytoplasm. The enzyme catalyses 1-(5-phospho-beta-D-ribosyl)-ATP + diphosphate = 5-phospho-alpha-D-ribose 1-diphosphate + ATP. The protein operates within amino-acid biosynthesis; L-histidine biosynthesis; L-histidine from 5-phospho-alpha-D-ribose 1-diphosphate: step 1/9. Its activity is regulated as follows. Feedback inhibited by histidine. In terms of biological role, catalyzes the condensation of ATP and 5-phosphoribose 1-diphosphate to form N'-(5'-phosphoribosyl)-ATP (PR-ATP). Has a crucial role in the pathway because the rate of histidine biosynthesis seems to be controlled primarily by regulation of HisG enzymatic activity. In Mycobacterium avium (strain 104), this protein is ATP phosphoribosyltransferase.